We begin with the raw amino-acid sequence, 202 residues long: Putative NAD(P)H nitroreductase YodC (202 aa).

FMN is bound by residues 11-13 (RAS), 68-70 (QKQ), 155-156 (GG), and Arg192.

The protein belongs to the nitroreductase family. FMN serves as cofactor.

It is found in the cytoplasm. Functionally, putative nitroreductase that may contribute to the degradation of aromatic compounds. The protein is Putative NAD(P)H nitroreductase YodC (yodC) of Bacillus subtilis (strain 168).